We begin with the raw amino-acid sequence, 340 residues long: Heat-inducible transcription repressor HrcA (340 aa).

It belongs to the HrcA family.

Negative regulator of class I heat shock genes (grpE-dnaK-dnaJ and groELS operons). Prevents heat-shock induction of these operons. This is Heat-inducible transcription repressor HrcA from Burkholderia ambifaria (strain MC40-6).